The chain runs to 491 residues: Large ribosomal subunit protein mL101 (rPPR4) (491 aa).

PPR repeat units lie at residues Thr122 to Pro156, Ser157 to Pro191, Asp192 to Ala226, Asp228 to Arg262, Asp263 to Ala293, Ser298 to Asn328, Asp333 to Leu367, and Asn368 to Asp402.

It belongs to the PPR family. P subfamily. In terms of assembly, component of the mitochondrial ribosome large subunit.

Its subcellular location is the mitochondrion. The protein is Large ribosomal subunit protein mL101 (rPPR4) of Arabidopsis thaliana (Mouse-ear cress).